Here is a 218-residue protein sequence, read N- to C-terminus: Cytochrome b6 (218 aa).

A helical transmembrane segment spans residues 35–55 (IFYCLGGITLVCFLIQFATGF). Cys-38 is a heme c binding site. The heme b site is built by His-89 and His-103. Helical transmembrane passes span 93–113 (ASMMVLMLILHVFRVYLTGGF), 119–139 (LTWVTGVTMAVITVSFGVTGY), and 189–209 (LHTFVLPWLLAVFMLAHFLMI). His-190 and His-205 together coordinate heme b.

It belongs to the cytochrome b family. PetB subfamily. In terms of assembly, the 4 large subunits of the cytochrome b6-f complex are cytochrome b6, subunit IV (17 kDa polypeptide, PetD), cytochrome f and the Rieske protein, while the 4 small subunits are PetG, PetL, PetM and PetN. The complex functions as a dimer. It depends on heme b as a cofactor. The cofactor is heme c.

It is found in the cellular thylakoid membrane. Component of the cytochrome b6-f complex, which mediates electron transfer between photosystem II (PSII) and photosystem I (PSI), cyclic electron flow around PSI, and state transitions. In Synechococcus sp. (strain RCC307), this protein is Cytochrome b6.